A 132-amino-acid polypeptide reads, in one-letter code: Matrix protein (132 aa).

The protein localises to the virion membrane. Functionally, envelope protein that may play a role in host-cell attachment and viral genome entry. This chain is Matrix protein, found in Halorubrum pleomorphic virus 1 (HRPV-1).